The sequence spans 318 residues: MSAARTLRVPGRHGYAAEFSPYLPGRLACAAAQHYGIAGCGTLLVLDQNESGLQIFRSFDWNDGLFDVTWSENNEHVLVTCSGDGSLQLWDTAKATGPLQVYKEHTQEVYSVDWSQTRGEQLVVSGSWDQTVKVWDPTVGNSLCTFRGHESVIYSTIWSPHIPGCFASASGDQTLRIWDVKTTGVRIVIPAHQTEILSCDWCKYNENLVVTGAVDCSLRGWDLRNVRQPVFELLGHTYAIRRVKFSPFHASVLASCSYDFTVRFWNFSKPDPLLETVEHHTEFTCGLDLSLQSPTQVADCSWDETIKIYDPVCLTVPG.

WD repeat units lie at residues D60–D91, E104–D136, G148–D179, A191–D222, G235–N266, and H279–D310.

Belongs to the WD repeat peroxin-7 family. As to quaternary structure, interacts with PEX5; interaction only takes place when PEX7 is associated with cargo proteins. Interacts with VWA8.

The protein resides in the cytoplasm. It localises to the cytosol. The protein localises to the peroxisome matrix. In terms of biological role, receptor required for the peroxisomal import of proteins containing a C-terminal PTS2-type peroxisomal targeting signal. Specifically binds to cargo proteins containing a PTS2 peroxisomal targeting signal in the cytosol. Cargo protein-binding triggers interaction with PEX5 and formation of a ternary complex composed of PEX5 and PEX7 along with PTS2-containing cargo proteins, which is tranlocated into peroxisomes by passing through the PEX13-PEX14 docking complex. This Mus musculus (Mouse) protein is Peroxisomal targeting signal 2 receptor.